A 373-amino-acid chain; its full sequence is MHNAAPITRRKSKRIYVGKVPVGDGAPIAVQSMTNTRTTDVEATVNQIRSLERVGVDIVRVSVPTMDAAEAFKLIKQQVNVPLVADIHFDYRIALKVAEYGVDCLRINPGNIGNEERIRSVVDCARYNNIPIRIGVNGGSLEKDLQEKYGEPTPEALLESAMRHVDILDRLNFDQFKVSVKASDVFLAVQSYRLLAARIDQPLHLGITEAGGARSGAVKSAIGLGLLLSEGIGDTLRISLAADPVEEVKVGFDILKSLRIRSRGINFIACPTCSRQEFDVIGTVNALEQRLEDIITPMDVSIIGCVVNGPGEALVSTIGVTGGHNKSGFYEDGVRQRERFDNEQMIDQLEAKIRAKASMMDENQRITVNLVDK.

The [4Fe-4S] cluster site is built by Cys270, Cys273, Cys305, and Glu312.

Belongs to the IspG family. [4Fe-4S] cluster is required as a cofactor.

It catalyses the reaction (2E)-4-hydroxy-3-methylbut-2-enyl diphosphate + oxidized [flavodoxin] + H2O + 2 H(+) = 2-C-methyl-D-erythritol 2,4-cyclic diphosphate + reduced [flavodoxin]. It functions in the pathway isoprenoid biosynthesis; isopentenyl diphosphate biosynthesis via DXP pathway; isopentenyl diphosphate from 1-deoxy-D-xylulose 5-phosphate: step 5/6. In terms of biological role, converts 2C-methyl-D-erythritol 2,4-cyclodiphosphate (ME-2,4cPP) into 1-hydroxy-2-methyl-2-(E)-butenyl 4-diphosphate. The chain is 4-hydroxy-3-methylbut-2-en-1-yl diphosphate synthase (flavodoxin) from Pectobacterium carotovorum subsp. carotovorum (strain PC1).